Consider the following 677-residue polypeptide: WD and tetratricopeptide repeats protein 1 (677 aa).

WD repeat units follow at residues 45 to 84 (GHSG…KLLS), 88 to 129 (GHTA…TIHM), 132 to 172 (DHTN…KHSE), 182 to 222 (GPMV…NHRK), and 265 to 305 (RLRV…RPYT). S352 carries the post-translational modification Phosphoserine. TPR repeat units follow at residues 361 to 394 (LERV…APHN) and 396 to 431 (MLYG…NPCH). The disordered stretch occupies residues 489–509 (EEKKAAGGGGGPVRLRSTSRK). S511 is modified (phosphoserine). WD repeat units lie at residues 535–575 (NTTT…LVRV) and 578–617 (GDES…EDLT). The tract at residues 655–677 (SSGGAGASDDEDSAEGQVQCRPS) is disordered.

It functions in the pathway protein modification; protein ubiquitination. In terms of biological role, may function as a substrate receptor for CUL4-DDB1 E3 ubiquitin-protein ligase complex. This is WD and tetratricopeptide repeats protein 1 (Wdtc1) from Mus musculus (Mouse).